Here is a 391-residue protein sequence, read N- to C-terminus: Succinyl-diaminopimelate desuccinylase (391 aa).

His78 is a binding site for Zn(2+). Asp80 is an active-site residue. Asp111 is a Zn(2+) binding site. Residue Glu145 is the Proton acceptor of the active site. 3 residues coordinate Zn(2+): Glu146, Glu174, and His360.

The protein belongs to the peptidase M20A family. DapE subfamily. As to quaternary structure, homodimer. Requires Zn(2+) as cofactor. It depends on Co(2+) as a cofactor.

The catalysed reaction is N-succinyl-(2S,6S)-2,6-diaminopimelate + H2O = (2S,6S)-2,6-diaminopimelate + succinate. The protein operates within amino-acid biosynthesis; L-lysine biosynthesis via DAP pathway; LL-2,6-diaminopimelate from (S)-tetrahydrodipicolinate (succinylase route): step 3/3. Catalyzes the hydrolysis of N-succinyl-L,L-diaminopimelic acid (SDAP), forming succinate and LL-2,6-diaminopimelate (DAP), an intermediate involved in the bacterial biosynthesis of lysine and meso-diaminopimelic acid, an essential component of bacterial cell walls. This chain is Succinyl-diaminopimelate desuccinylase, found in Acidovorax ebreus (strain TPSY) (Diaphorobacter sp. (strain TPSY)).